The following is a 520-amino-acid chain: GMP synthase [glutamine-hydrolyzing] (520 aa).

Residues 12–205 (KIIVLDYGSQ…AISICGARGD (194 aa)) form the Glutamine amidotransferase type-1 domain. The active-site Nucleophile is Cys89. Active-site residues include His179 and Glu181. The GMPS ATP-PPase domain occupies 206–395 (WSMDNFIDME…LGMPEEIVWR (190 aa)). Residue 233-239 (SGGVDSS) coordinates ATP.

As to quaternary structure, homodimer.

It carries out the reaction XMP + L-glutamine + ATP + H2O = GMP + L-glutamate + AMP + diphosphate + 2 H(+). It functions in the pathway purine metabolism; GMP biosynthesis; GMP from XMP (L-Gln route): step 1/1. In terms of biological role, catalyzes the synthesis of GMP from XMP. This is GMP synthase [glutamine-hydrolyzing] from Streptococcus pyogenes serotype M3 (strain SSI-1).